Consider the following 146-residue polypeptide: Hemoglobin subunit beta (146 aa).

The residue at position 1 (valine 1) is an N-acetylvaline. A Globin domain is found at 2–146 (HLTAEEKSAV…VANALAHKYH (145 aa)). The residue at position 12 (threonine 12) is a Phosphothreonine. Serine 44 carries the phosphoserine modification. Lysine 59 bears the N6-acetyllysine mark. Histidine 63 contacts heme b. At lysine 82 the chain carries N6-acetyllysine. Position 92 (histidine 92) interacts with heme b. At cysteine 93 the chain carries S-nitrosocysteine. The residue at position 144 (lysine 144) is an N6-acetyllysine.

Belongs to the globin family. In terms of assembly, heterotetramer of two alpha chains and two beta chains. Red blood cells.

In terms of biological role, involved in oxygen transport from the lung to the various peripheral tissues. The chain is Hemoglobin subunit beta (HBB) from Meles meles (Eurasian badger).